A 126-amino-acid chain; its full sequence is Fluoride-specific ion channel FluC (126 aa).

3 helical membrane passes run 33-53 (LPLN…VFIV), 64-84 (YSLF…SFAL), and 96-116 (GALA…LIGG). Residues Gly-74 and Thr-77 each contribute to the Na(+) site.

This sequence belongs to the fluoride channel Fluc/FEX (TC 1.A.43) family.

It localises to the cell membrane. It catalyses the reaction fluoride(in) = fluoride(out). Na(+) is not transported, but it plays an essential structural role and its presence is essential for fluoride channel function. In terms of biological role, fluoride-specific ion channel. Important for reducing fluoride concentration in the cell, thus reducing its toxicity. The protein is Fluoride-specific ion channel FluC of Nitrosopumilus maritimus (strain SCM1).